Reading from the N-terminus, the 194-residue chain is BCL2/adenovirus E1B 19 kDa protein-interacting protein 3 (194 aa).

A disordered region spans residues 1-102; it reads MSQNGAPGMQ…SQSEEDDIER (102 aa). A compositionally biased stretch (basic and acidic residues) spans 42–55; that stretch reads DMEKILLDAQHESG. Phosphoserine occurs at positions 54, 66, 86, 92, and 95. The segment covering 56–69 has biased composition (low complexity); the sequence is RSSSKSSHCDSPPR. Over residues 78 to 88 the composition is skewed to basic and acidic residues; the sequence is RASETDTHSIG. The BH3 signature appears at 100–125; that stretch reads IERRKEVESILKKNSDWIWDWSSRPE. A helical transmembrane segment spans residues 164–184; that stretch reads VFLPSLLLSHLLAIGLGIYIG.

The protein belongs to the NIP3 family. As to quaternary structure, homodimer. Binds to BCL2. Interacts with BNIP3L and ACAA2. Interacts (via BH3 domain) with SPATA18 (via coiled-coil domains). Interacts with BOK; promotes BOK oligomerization. Interacts with PPTC7; this interaction promotes BNIP3 degradation. (Microbial infection) Interacts with adenovirus E1B 19 kDa protein. In terms of assembly, (Microbial infection) Interacts with Epstein-Barr virus BHRF1.

Its subcellular location is the mitochondrion. The protein localises to the mitochondrion outer membrane. In terms of biological role, apoptosis-inducing protein that can overcome BCL2 suppression. May play a role in repartitioning calcium between the two major intracellular calcium stores in association with BCL2. Involved in mitochondrial quality control via its interaction with SPATA18/MIEAP: in response to mitochondrial damage, participates in mitochondrial protein catabolic process (also named MALM) leading to the degradation of damaged proteins inside mitochondria. The physical interaction of SPATA18/MIEAP, BNIP3 and BNIP3L/NIX at the mitochondrial outer membrane regulates the opening of a pore in the mitochondrial double membrane in order to mediate the translocation of lysosomal proteins from the cytoplasm to the mitochondrial matrix. Plays an important role in the calprotectin (S100A8/A9)-induced cell death pathway. The chain is BCL2/adenovirus E1B 19 kDa protein-interacting protein 3 from Homo sapiens (Human).